Here is a 542-residue protein sequence, read N- to C-terminus: MAKEIKFSEETRRALEAGVNKLADTVKVTLGPKGRNVILDKKFGSPLITNDGVTIAKEIELEDRFENMGAQLVKEVATKTNDVAGDGTTTATVLAQAIIREGLKNVTAGANPILLRKGIQKAVTVAVEELKNQSRIVETQEAISQVASISAGDEEVGKLIAEAMEIVGKDGVITVEESQTMNTELDAVEGMQFDRGFVSAYMVTDVDKMEAVLNDPYILITDKKISNIQELLPVLEQIVQQGKKLLIIAEDVEGEALSTLVVNKLRGTFDVVAVKAPGFGDRRKEMLQDIAILTGAQVISEELGYDLKEADLSMLGRASSVKVTKESTTIVDGSGDKKAIEDRVTQIKHQVEQTTSDFDREKLMERLAKLAGGVAVVKVGAATEVELKERKLRIEDALNATRAAVEEGIVAGGGTAFVSVIPAIGTLIESLEGEVKLGAQIVKKALEEPLRQIAINAGLEGAVIVQNVVNSEAETGFDALNEKYVNMIEAGIVDPTKVSRSALQNAASIASTFLTTEAAVADLPEKEDAGMPGMGGGMPGMM.

ATP is bound by residues 29 to 32, 86 to 90, Gly-413, 478 to 480, and Asp-494; these read TLGP, DGTTT, and DAL.

It belongs to the chaperonin (HSP60) family. As to quaternary structure, forms a cylinder of 14 subunits composed of two heptameric rings stacked back-to-back. Interacts with the co-chaperonin GroES.

It localises to the cytoplasm. The enzyme catalyses ATP + H2O + a folded polypeptide = ADP + phosphate + an unfolded polypeptide.. Together with its co-chaperonin GroES, plays an essential role in assisting protein folding. The GroEL-GroES system forms a nano-cage that allows encapsulation of the non-native substrate proteins and provides a physical environment optimized to promote and accelerate protein folding. The sequence is that of Chaperonin GroEL from Clostridioides difficile (strain 630) (Peptoclostridium difficile).